Reading from the N-terminus, the 111-residue chain is Large ribosomal subunit protein uL22 (111 aa).

It belongs to the universal ribosomal protein uL22 family. In terms of assembly, part of the 50S ribosomal subunit.

In terms of biological role, this protein binds specifically to 23S rRNA; its binding is stimulated by other ribosomal proteins, e.g. L4, L17, and L20. It is important during the early stages of 50S assembly. It makes multiple contacts with different domains of the 23S rRNA in the assembled 50S subunit and ribosome. The globular domain of the protein is located near the polypeptide exit tunnel on the outside of the subunit, while an extended beta-hairpin is found that lines the wall of the exit tunnel in the center of the 70S ribosome. The chain is Large ribosomal subunit protein uL22 from Fusobacterium nucleatum subsp. nucleatum (strain ATCC 25586 / DSM 15643 / BCRC 10681 / CIP 101130 / JCM 8532 / KCTC 2640 / LMG 13131 / VPI 4355).